Consider the following 331-residue polypeptide: Ketol-acid reductoisomerase (NADP(+)) (331 aa).

Residues 2-182 (AQLFYDSDAD…GGTRAGILET (181 aa)) enclose the KARI N-terminal Rossmann domain. Residues 25–28 (YGSQ), Ser51, Ser53, and 83–86 (DEFQ) contribute to the NADP(+) site. The active site involves His108. Gly134 is a binding site for NADP(+). The KARI C-terminal knotted domain occupies 183–328 (NFKEETETDL…KGLRSMFSWL (146 aa)). Mg(2+)-binding residues include Asp191, Glu195, Glu227, and Glu231. Ser252 serves as a coordination point for substrate.

The protein belongs to the ketol-acid reductoisomerase family. Mg(2+) is required as a cofactor.

The catalysed reaction is (2R)-2,3-dihydroxy-3-methylbutanoate + NADP(+) = (2S)-2-acetolactate + NADPH + H(+). It catalyses the reaction (2R,3R)-2,3-dihydroxy-3-methylpentanoate + NADP(+) = (S)-2-ethyl-2-hydroxy-3-oxobutanoate + NADPH + H(+). It participates in amino-acid biosynthesis; L-isoleucine biosynthesis; L-isoleucine from 2-oxobutanoate: step 2/4. The protein operates within amino-acid biosynthesis; L-valine biosynthesis; L-valine from pyruvate: step 2/4. Functionally, involved in the biosynthesis of branched-chain amino acids (BCAA). Catalyzes an alkyl-migration followed by a ketol-acid reduction of (S)-2-acetolactate (S2AL) to yield (R)-2,3-dihydroxy-isovalerate. In the isomerase reaction, S2AL is rearranged via a Mg-dependent methyl migration to produce 3-hydroxy-3-methyl-2-ketobutyrate (HMKB). In the reductase reaction, this 2-ketoacid undergoes a metal-dependent reduction by NADPH to yield (R)-2,3-dihydroxy-isovalerate. The sequence is that of Ketol-acid reductoisomerase (NADP(+)) from Synechococcus sp. (strain CC9311).